The following is a 172-amino-acid chain: Large ribosomal subunit protein uL10 (172 aa).

Belongs to the universal ribosomal protein uL10 family. In terms of assembly, part of the ribosomal stalk of the 50S ribosomal subunit. The N-terminus interacts with L11 and the large rRNA to form the base of the stalk. The C-terminus forms an elongated spine to which L12 dimers bind in a sequential fashion forming a multimeric L10(L12)X complex.

Its function is as follows. Forms part of the ribosomal stalk, playing a central role in the interaction of the ribosome with GTP-bound translation factors. This is Large ribosomal subunit protein uL10 from Rhodospirillum centenum (strain ATCC 51521 / SW).